A 433-amino-acid polypeptide reads, in one-letter code: Enolase (433 aa).

(2R)-2-phosphoglycerate is bound at residue Gln167. Glu209 acts as the Proton donor in catalysis. 3 residues coordinate Mg(2+): Asp246, Glu287, and Asp314. Residues Lys339, Arg368, Ser369, and Lys390 each coordinate (2R)-2-phosphoglycerate. Catalysis depends on Lys339, which acts as the Proton acceptor.

The protein belongs to the enolase family. It depends on Mg(2+) as a cofactor.

It is found in the cytoplasm. It localises to the secreted. Its subcellular location is the cell surface. It carries out the reaction (2R)-2-phosphoglycerate = phosphoenolpyruvate + H2O. The protein operates within carbohydrate degradation; glycolysis; pyruvate from D-glyceraldehyde 3-phosphate: step 4/5. Its function is as follows. Catalyzes the reversible conversion of 2-phosphoglycerate (2-PG) into phosphoenolpyruvate (PEP). It is essential for the degradation of carbohydrates via glycolysis. The polypeptide is Enolase (Prochlorococcus marinus (strain NATL2A)).